We begin with the raw amino-acid sequence, 166 residues long: Protein-export protein SecB (166 aa).

Residues 1–16 (MTDTSAAGNPTPGQQP) show a composition bias toward polar residues. Residues 1–21 (MTDTSAAGNPTPGQQPANPPS) are disordered.

This sequence belongs to the SecB family. In terms of assembly, homotetramer, a dimer of dimers. One homotetramer interacts with 1 SecA dimer.

It is found in the cytoplasm. One of the proteins required for the normal export of preproteins out of the cell cytoplasm. It is a molecular chaperone that binds to a subset of precursor proteins, maintaining them in a translocation-competent state. It also specifically binds to its receptor SecA. In Hyphomonas neptunium (strain ATCC 15444), this protein is Protein-export protein SecB.